The following is a 541-amino-acid chain: NAD(P)H-quinone oxidoreductase subunit 2 A, chloroplastic (541 aa).

14 helical membrane passes run 24-44 (LLLF…GLIL), 57-77 (IPWL…ALLF), 99-119 (IFQF…VEYI), 124-144 (MAIT…MFLC), 149-169 (FITI…LSGY), 183-203 (YLLM…WLYG), 227-247 (PGIS…LSPA), 289-309 (ILSP…AASA), 326-346 (WHLL…LIAI), 354-374 (MLAY…IVGD), 385-405 (YMLF…LFGL), 426-446 (ALSL…AGFF), 449-469 (LYLF…IGLL), and 515-535 (MIVC…IIAI).

It belongs to the complex I subunit 2 family. In terms of assembly, NDH is composed of at least 16 different subunits, 5 of which are encoded in the nucleus.

The protein resides in the plastid. It is found in the chloroplast thylakoid membrane. It catalyses the reaction a plastoquinone + NADH + (n+1) H(+)(in) = a plastoquinol + NAD(+) + n H(+)(out). It carries out the reaction a plastoquinone + NADPH + (n+1) H(+)(in) = a plastoquinol + NADP(+) + n H(+)(out). Its function is as follows. NDH shuttles electrons from NAD(P)H:plastoquinone, via FMN and iron-sulfur (Fe-S) centers, to quinones in the photosynthetic chain and possibly in a chloroplast respiratory chain. The immediate electron acceptor for the enzyme in this species is believed to be plastoquinone. Couples the redox reaction to proton translocation, and thus conserves the redox energy in a proton gradient. In Coffea arabica (Arabian coffee), this protein is NAD(P)H-quinone oxidoreductase subunit 2 A, chloroplastic.